The primary structure comprises 95 residues: Citrate lyase acyl carrier protein (95 aa).

S14 is modified (O-(phosphoribosyl dephospho-coenzyme A)serine).

It belongs to the CitD family. As to quaternary structure, oligomer with a subunit composition of (alpha,beta,gamma)6.

The protein resides in the cytoplasm. Its function is as follows. Covalent carrier of the coenzyme of citrate lyase. This chain is Citrate lyase acyl carrier protein, found in Haemophilus influenzae (strain ATCC 51907 / DSM 11121 / KW20 / Rd).